The chain runs to 332 residues: Phenol 2-monooxygenase, oxygenase component MhpL (332 aa).

It belongs to the TmoE/XamoE family.

The enzyme catalyses phenol + NADH + O2 + H(+) = catechol + NAD(+) + H2O. It participates in aromatic compound metabolism; phenol degradation. In terms of biological role, part of a multicomponent enzyme which catalyzes the degradation of phenol and some of its methylated derivatives. The sequence is that of Phenol 2-monooxygenase, oxygenase component MhpL (mphL) from Acinetobacter pittii (strain PHEA-2).